The chain runs to 647 residues: XK-related protein 4 (647 aa).

A compositionally biased stretch (basic and acidic residues) spans 1-15; that stretch reads MAAKSDGRLKMKKSS. Residues 1–44 form a disordered region; that stretch reads MAAKSDGRLKMKKSSDVAFTPLQNSDNSGSVQGLAPGLPSGSGA. Residues 21–31 show a composition bias toward polar residues; that stretch reads PLQNSDNSGSV. Transmembrane regions (helical) follow at residues 112-132 and 142-162; these read WILA…WLAV and WFGL…VFSF. Ser-197 is modified (phosphoserine). The interval 197–238 is disordered; that stretch reads SAAGEGEVRPSTPQRQASNASKSNIAATNSGSNSNGATRTSG. Over residues 207-236 the composition is skewed to polar residues; sequence STPQRQASNASKSNIAATNSGSNSNGATRT. The next 8 helical transmembrane spans lie at 245–265, 303–323, 328–348, 362–382, 393–415, 425–445, 454–474, and 484–504; these read CSFC…GQIW, HLLA…CIIV, LQAL…WALA, KPIS…TIAA, VFQL…WIVH, WEEI…WFNV, LFIY…LWYL, and FAIP…VFML.

This sequence belongs to the XK family. Homodimer; homodimerization takes place upon caspase cleavage. Interacts with the processed C-terminus of XRCC4 (protein XRCC4, C-terminus); interaction promotes the phospholipid scramblase activity. Undergoes proteolytic processing by caspase-3 (CASP3), caspase-6 (CASP6) and caspase-7 (CASP7) to generate the XK-related protein 4, processed form, leading to its activation. In terms of tissue distribution, highly expressed in expressed in the brain; weakly expressed in the spleen, thymus, uterus, blood vessels and fetus.

Its subcellular location is the cell membrane. The enzyme catalyses a 1,2-diacyl-sn-glycero-3-phospho-L-serine(in) = a 1,2-diacyl-sn-glycero-3-phospho-L-serine(out). Phospholipid scramblase activity is activated upon caspase cleavage to generate the XK-related protein 4, processed form. Does not act prior the onset of apoptosis. With respect to regulation, homodimerizes upon caspase cleavage. Phospholipid scramblase activity is activated following interaction with the processed C-terminus of XRCC4 (protein XRCC4, C-terminus). Its function is as follows. Phospholipid scramblase that promotes phosphatidylserine exposure on apoptotic cell surface. Phosphatidylserine is a specific marker only present at the surface of apoptotic cells and acts as a specific signal for engulfment. This Mus musculus (Mouse) protein is XK-related protein 4.